Consider the following 443-residue polypeptide: Probable D-serine dehydratase (443 aa).

An N6-(pyridoxal phosphate)lysine modification is found at Lys116.

Belongs to the serine/threonine dehydratase family. DsdA subfamily. It depends on pyridoxal 5'-phosphate as a cofactor.

The catalysed reaction is D-serine = pyruvate + NH4(+). In Bacillus cereus (strain ATCC 14579 / DSM 31 / CCUG 7414 / JCM 2152 / NBRC 15305 / NCIMB 9373 / NCTC 2599 / NRRL B-3711), this protein is Probable D-serine dehydratase.